We begin with the raw amino-acid sequence, 535 residues long: Heparanase (535 aa).

A signal peptide spans 1-27 (MLRLLLLWLWGPLGALAQGAPAGTAPT). Heparan sulfate group-binding positions include 54 to 56 (DAS) and T89. A propeptide spans 102–149 (PTSEERSYWKSQVNHDICRSEPVSAAVLRKLQVEWPFQELLLLREQYQ) (linker peptide). C119 and C171 are joined by a disulfide. Position 150–154 (150–154 (KEFKN)) interacts with heparan sulfate group. N-linked (GlcNAc...) asparagine glycans are attached at residues N192 and N209. The active-site Proton donor is E217. Heparan sulfate group-binding positions include 262–272 (QPRGKTVKLLR), H288, and R295. Residues 280–409 (EVIDSLTWHH…LLFKKLVGPR (130 aa)) form a required for heterodimerization with the heparanase 8 kDa subunit region. E335 functions as the Nucleophile in the catalytic mechanism. Heparan sulfate group is bound by residues 340–342 (YGG) and 381–383 (GNY). A disulfide bridge links C429 with C534. Residue N451 is glycosylated (N-linked (GlcNAc...) asparagine). A required for transferring proheparanase to the Golgi apparatus, secretion and subsequent enzyme activity and for enhancement of PKB/AKT1 phosphorylation region spans residues 519–535 (FSYGFFVIRNAKIAACI).

It belongs to the glycosyl hydrolase 79 family. Heterodimer; heterodimer formation between the 8 kDa and the 50 kDa subunits is required for enzyme activity. Interacts with TF; the interaction, inhibited by heparin, enhances the generation of activated factor X and activates coagulation. Interacts with HRG; the interaction is enhanced at acidic pH, partially inhibits binding of HPSE to cell surface receptors and modulates its enzymatic activity. Interacts with SDC1; the interaction enhances the shedding of SDC1. Interacts with HPSE2. Proteolytically processed. The cleavage of the 65 kDa form leads to the generation of a linker peptide, and the 8 kDa and 50 kDa products. The active form, the 8/50 kDa heterodimer, is resistant to degradation. Complete removal of the linker peptide appears to be a prerequisite to the complete activation of the enzyme. In terms of processing, N-glycosylated. Glycosylation of the 50 kDa subunit appears to be essential for its solubility. In terms of tissue distribution, expressed in skin, mainly in the stratum granulosum and the first layer of the stratum corneum in the upper part of the epidermis. Also detected in hair follicles and in sebaceous glands.

It localises to the lysosome membrane. Its subcellular location is the secreted. The protein localises to the nucleus. It carries out the reaction endohydrolysis of (1-&gt;4)-beta-D-glycosidic bonds of heparan sulfate chains in heparan sulfate proteoglycan.. Inhibited by EDTA and activated by calcium and magnesium. Inhibited by laminarin sulfate and, to a lower extent, by heparin and sulfamin. Its function is as follows. Endoglycosidase that cleaves heparan sulfate proteoglycans (HSPGs) into heparan sulfate side chains and core proteoglycans. Participates in extracellular matrix (ECM) degradation and remodeling. Selectively cleaves the linkage between a glucuronic acid unit and an N-sulfo glucosamine unit carrying either a 3-O-sulfo or a 6-O-sulfo group. Can also cleave the linkage between a glucuronic acid unit and an N-sulfo glucosamine unit carrying a 2-O-sulfo group, but not linkages between a glucuronic acid unit and a 2-O-sulfated iduronic acid moiety. It is essentially inactive at neutral pH but becomes active under acidic conditions such as during tumor invasion and in inflammatory processes. Facilitates cell migration associated with metastasis, wound healing and inflammation. Enhances shedding of syndecans, and increases endothelial invasion and angiogenesis in myelomas. Acts as a procoagulant by increasing the generation of activation factor X in the presence of tissue factor and activation factor VII. Increases cell adhesion to the extracellular matrix (ECM), independent of its enzymatic activity. Induces AKT1/PKB phosphorylation via lipid rafts increasing cell mobility and invasion. Heparin increases this AKT1/PKB activation. Regulates osteogenesis. Enhances angiogenesis through up-regulation of SRC-mediated activation of VEGF. Implicated in hair follicle inner root sheath differentiation and hair homeostasis. This Mus musculus (Mouse) protein is Heparanase (Hpse).